The following is a 138-amino-acid chain: Putative nickel-responsive regulator (138 aa).

Ni(2+) contacts are provided by histidine 78, histidine 89, histidine 91, and cysteine 97.

This sequence belongs to the transcriptional regulatory CopG/NikR family. Requires Ni(2+) as cofactor.

Functionally, transcriptional regulator. The protein is Putative nickel-responsive regulator of Thermococcus kodakarensis (strain ATCC BAA-918 / JCM 12380 / KOD1) (Pyrococcus kodakaraensis (strain KOD1)).